We begin with the raw amino-acid sequence, 248 residues long: Triosephosphate isomerase (248 aa).

9 to 11 (NWK) contacts substrate. The active-site Electrophile is the histidine 94. The Proton acceptor role is filled by glutamate 166. Substrate contacts are provided by residues glycine 172, serine 212, and 233-234 (GG).

It belongs to the triosephosphate isomerase family. Homodimer.

It is found in the cytoplasm. It catalyses the reaction D-glyceraldehyde 3-phosphate = dihydroxyacetone phosphate. It participates in carbohydrate biosynthesis; gluconeogenesis. The protein operates within carbohydrate degradation; glycolysis; D-glyceraldehyde 3-phosphate from glycerone phosphate: step 1/1. In terms of biological role, involved in the gluconeogenesis. Catalyzes stereospecifically the conversion of dihydroxyacetone phosphate (DHAP) to D-glyceraldehyde-3-phosphate (G3P). The protein is Triosephosphate isomerase of Clostridium botulinum (strain ATCC 19397 / Type A).